The following is a 486-amino-acid chain: MKRLKINYILIGVVTLLLALALWPNITWRGGQGGQLEEIKSRGELRISTLNSPLTYFTTKQGPSGLDYELAKRFANYLGVKLVVIPHKNINDLFDDLDDDDADLLAAGLIYNQDRLSRARTGPAYYSVSQQLVYRLGTARPKTFADIKGKLAVASGSAHVSTLKQLKQSKFPDLSWEASSDLTSKELLEQVADGKLDYTLGDSVTIALLQRIHPQLAVAFDVTDEEPVTWYLKRGTDDSLYAAMLDFYSQMVDDGTLARLEEKYLGHVGSFDYVDTKTFLSAIDSVLPTFRSLFEKYASEIDWKLLAAIAYQESHWNPQATSPTGVRGLMMLTRATADGLGVNDRLDPEESIQGGALYLQRLMAKVPDSVPEDERIWFSLAAYNMGWGHMLDARKLTKMQKGNPDSWVDVKQRLPMLSQKRYYPQLTYGYARGREAYNYVENIRRYQVSLVGYLQEKERKAAQEAAEQADQGKGYPAVTPELALNF.

The first 21 residues, 1-21 (MKRLKINYILIGVVTLLLALA), serve as a signal peptide directing secretion. Residues 22–268 (LWPNITWRGG…RLEEKYLGHV (247 aa)) are non-LT domain. The segment at 269 to 486 (GSFDYVDTKT…AVTPELALNF (218 aa)) is LT domain. Glu-313 is an active-site residue.

In the N-terminal section; belongs to the bacterial solute-binding protein 3 family. It in the C-terminal section; belongs to the transglycosylase Slt family.

The protein resides in the cell outer membrane. The catalysed reaction is Exolytic cleavage of the (1-&gt;4)-beta-glycosidic linkage between N-acetylmuramic acid (MurNAc) and N-acetylglucosamine (GlcNAc) residues in peptidoglycan, from either the reducing or the non-reducing ends of the peptidoglycan chains, with concomitant formation of a 1,6-anhydrobond in the MurNAc residue.. Functionally, murein-degrading enzyme that degrades murein glycan strands and insoluble, high-molecular weight murein sacculi, with the concomitant formation of a 1,6-anhydromuramoyl product. Lytic transglycosylases (LTs) play an integral role in the metabolism of the peptidoglycan (PG) sacculus. Their lytic action creates space within the PG sacculus to allow for its expansion as well as for the insertion of various structures such as secretion systems and flagella. The polypeptide is Membrane-bound lytic murein transglycosylase F (Serratia proteamaculans (strain 568)).